The sequence spans 139 residues: Large-conductance mechanosensitive channel (139 aa).

2 helical membrane-spanning segments follow: residues alanine 9–phenylalanine 29 and isoleucine 79–isoleucine 99.

This sequence belongs to the MscL family. In terms of assembly, homopentamer.

It is found in the cell inner membrane. In terms of biological role, channel that opens in response to stretch forces in the membrane lipid bilayer. May participate in the regulation of osmotic pressure changes within the cell. The protein is Large-conductance mechanosensitive channel of Pseudomonas putida (strain ATCC 47054 / DSM 6125 / CFBP 8728 / NCIMB 11950 / KT2440).